A 334-amino-acid polypeptide reads, in one-letter code: Ribosomal RNA small subunit methyltransferase H (334 aa).

Residues 53–55 (GGH), aspartate 72, phenylalanine 99, aspartate 122, and histidine 129 each bind S-adenosyl-L-methionine.

Belongs to the methyltransferase superfamily. RsmH family.

It localises to the cytoplasm. The catalysed reaction is cytidine(1402) in 16S rRNA + S-adenosyl-L-methionine = N(4)-methylcytidine(1402) in 16S rRNA + S-adenosyl-L-homocysteine + H(+). Specifically methylates the N4 position of cytidine in position 1402 (C1402) of 16S rRNA. The polypeptide is Ribosomal RNA small subunit methyltransferase H (Leptospira interrogans serogroup Icterohaemorrhagiae serovar Lai (strain 56601)).